Consider the following 286-residue polypeptide: Bifunctional protein FolD (286 aa).

Residues 165–167 (GRS), serine 190, and valine 231 contribute to the NADP(+) site.

Belongs to the tetrahydrofolate dehydrogenase/cyclohydrolase family. As to quaternary structure, homodimer.

It catalyses the reaction (6R)-5,10-methylene-5,6,7,8-tetrahydrofolate + NADP(+) = (6R)-5,10-methenyltetrahydrofolate + NADPH. The catalysed reaction is (6R)-5,10-methenyltetrahydrofolate + H2O = (6R)-10-formyltetrahydrofolate + H(+). Its pathway is one-carbon metabolism; tetrahydrofolate interconversion. Its function is as follows. Catalyzes the oxidation of 5,10-methylenetetrahydrofolate to 5,10-methenyltetrahydrofolate and then the hydrolysis of 5,10-methenyltetrahydrofolate to 10-formyltetrahydrofolate. This is Bifunctional protein FolD from Bacillus thuringiensis (strain Al Hakam).